The following is a 384-amino-acid chain: MTGIPPPSRFPEQPIPPWRRAVLKVGSSLLAADGGGLSPRFALDLAHFVSANITAGRQLVIVSSGAVAAGRALIPPLPESGGALAARQALAALGQAQLIALWQRFFDRPVAQVLLTHDDLRNRRRYLNARATLRELLHLGTLPVVNENDTVSVDELKLGDNDNLAAIVAALIDAQALFIATDIDGLYTTDPRHHPDAQPLHEVRTLTPEHLAMAGDSSSTGGTGGMRTKLEAALKAGAAGIDTYLFNGRSSDVVRGLAQHRLRGTRIHPTCTPIAARKYWLRHAPVEPGAILIDAGAAAALAQQGASLLPGGVLSAEGDFRRGDMIQITTRSPDHPSHPLARGLVQYSAADVRRIAGCHSRDIQTLLGYTYGDTIVHRDDLVLL.

Lys-24 contributes to the ATP binding site. The substrate site is built by Ser-64, Asp-149, and Asn-161. Residues 181–182 (TD) and 223–229 (TGGMRTK) each bind ATP. Positions 288–370 (PGAILIDAGA…RDIQTLLGYT (83 aa)) constitute a PUA domain.

It belongs to the glutamate 5-kinase family.

It localises to the cytoplasm. The enzyme catalyses L-glutamate + ATP = L-glutamyl 5-phosphate + ADP. The protein operates within amino-acid biosynthesis; L-proline biosynthesis; L-glutamate 5-semialdehyde from L-glutamate: step 1/2. Functionally, catalyzes the transfer of a phosphate group to glutamate to form L-glutamate 5-phosphate. The chain is Glutamate 5-kinase from Xylella fastidiosa (strain M12).